Consider the following 206-residue polypeptide: RNA-binding protein (206 aa).

A disordered region spans residues 87–206; the sequence is PRGMQRGNRR…SGAKSKRRPR (120 aa). Residues 109–132 are compositionally biased toward basic and acidic residues; it reads MPKDDSNDRKKAKTSKDRKVEKSS.

It belongs to the phytoreovirus RNA-binding protein family.

The protein resides in the host cytoplasm. Its function is as follows. Constituent of viral factories. Binds to ssRNA and dsRNA. The protein is RNA-binding protein of Rice gall dwarf virus (RGDV).